The sequence spans 454 residues: Replicative DNA helicase DnaC (454 aa).

In terms of domain architecture, SF4 helicase spans Arg179–Phe445. Ala210–Thr217 contributes to the ATP binding site.

It belongs to the helicase family. DnaB subfamily. The DNA replisome assembles sequentially on oriC in this order; DnaA, DnaD, DnaB, DnaI-DnaC helicase. Monomer in the absence of ATP, in its presence forms a probable homohexamer which is not active as a helicase in vitro. Interacts separately and simultaneously with helicase loaders DnaB and DnaI. Interaction with DnaB does not require ATP. Interaction with DnaI requires ATP, probably forms a DnaC(6):DnaI(6) complex, which is not active as a helicase.

The protein localises to the cytoplasm. The protein resides in the nucleoid. The catalysed reaction is Couples ATP hydrolysis with the unwinding of duplex DNA at the replication fork by translocating in the 5'-3' direction. This creates two antiparallel DNA single strands (ssDNA). The leading ssDNA polymer is the template for DNA polymerase III holoenzyme which synthesizes a continuous strand.. It catalyses the reaction ATP + H2O = ADP + phosphate + H(+). The main replicative DNA helicase, it participates in initiation and elongation during chromosome replication. Travels ahead of the DNA replisome, separating dsDNA into templates for DNA synthesis. The monomer has helicase activity in the presence of DnaI which is further increased by DnaB; the purified oligomeric form (probably a DnaC hexamer) does not have helicase activity in vitro, nor does the DnaC(6):DnaI(6) complex. The direction was not determined but is probably 5'-3'. Helicase activity requires an rNTP and is inactive with dNTPs. Has weak ATPase activity as a monomer, as an oligomer has ATPase activity which is stimulated by single-stranded (ss)DNA and further stimulated by DnaI and more by DnaB. In terms of biological role, deletion of a single T residue in the promoter region (a run of 8 Ts becomes 7 Ts) decreases the helicase levels by 50%, decreasing DNA replication inititation during fast growth in rich medium. Suppresses the synthetic lethality of a dnaA1-yabA deletion for growth on rich medium. The protein is Replicative DNA helicase DnaC of Bacillus subtilis (strain 168).